A 378-amino-acid polypeptide reads, in one-letter code: tRNA N(3)-cytidine methyltransferase METTL2B (378 aa).

N-acetylalanine is present on alanine 2. Phosphoserine is present on serine 4. Residues tryptophan 78 and tyrosine 82 each coordinate S-adenosyl-L-methionine. Threonine 154 carries the phosphothreonine modification. Residues glycine 188, aspartate 213, aspartate 239, leucine 240, and isoleucine 260 each contribute to the S-adenosyl-L-methionine site.

Belongs to the methyltransferase superfamily. METL family. Monomer. Interacts with DALRD3.

Its subcellular location is the cytoplasm. It carries out the reaction cytidine(32) in tRNA(Thr) + S-adenosyl-L-methionine = N(3)-methylcytidine(32) in tRNA(Thr) + S-adenosyl-L-homocysteine + H(+). The enzyme catalyses cytidine(32) in tRNA(Arg)(CCU) + S-adenosyl-L-methionine = N(3)-methylcytidine(32) in tRNA(Arg)(CCU) + S-adenosyl-L-homocysteine + H(+). Functionally, S-adenosyl-L-methionine-dependent methyltransferase that mediates N(3)-methylcytidine modification of residue 32 of the tRNA anticodon loop of tRNA(Thr)(UGU) and tRNA(Arg)(CCU). The polypeptide is tRNA N(3)-cytidine methyltransferase METTL2B (Homo sapiens (Human)).